The chain runs to 103 residues: Small ribosomal subunit protein uS10 (103 aa).

It belongs to the universal ribosomal protein uS10 family. Part of the 30S ribosomal subunit.

Involved in the binding of tRNA to the ribosomes. The sequence is that of Small ribosomal subunit protein uS10 from Clostridioides difficile (strain 630) (Peptoclostridium difficile).